A 283-amino-acid polypeptide reads, in one-letter code: Elongation factor Ts (283 aa).

The tract at residues 80 to 83 is involved in Mg(2+) ion dislocation from EF-Tu; the sequence is TDFV.

Belongs to the EF-Ts family.

It localises to the cytoplasm. In terms of biological role, associates with the EF-Tu.GDP complex and induces the exchange of GDP to GTP. It remains bound to the aminoacyl-tRNA.EF-Tu.GTP complex up to the GTP hydrolysis stage on the ribosome. This chain is Elongation factor Ts, found in Cronobacter sakazakii (strain ATCC BAA-894) (Enterobacter sakazakii).